The following is a 95-amino-acid chain: Large ribosomal subunit protein bL25 (95 aa).

Belongs to the bacterial ribosomal protein bL25 family. In terms of assembly, part of the 50S ribosomal subunit; part of the 5S rRNA/L5/L18/L25 subcomplex. Contacts the 5S rRNA. Binds to the 5S rRNA independently of L5 and L18.

This is one of the proteins that binds to the 5S RNA in the ribosome where it forms part of the central protuberance. This chain is Large ribosomal subunit protein bL25, found in Haemophilus ducreyi (strain 35000HP / ATCC 700724).